The following is a 172-amino-acid chain: Translationally-controlled tumor protein homolog (172 aa).

A TCTP domain is found at 1–172 (MKIYKDIITG…FKHGLDEEKC (172 aa)).

It belongs to the TCTP family.

It localises to the cytoplasm. Functionally, involved in calcium binding and microtubule stabilization. In Drosophila yakuba (Fruit fly), this protein is Translationally-controlled tumor protein homolog.